Reading from the N-terminus, the 820-residue chain is Crinkler effector protein 108 (820 aa).

The N-terminal stretch at 1-17 is a signal peptide; that stretch reads MVKLYCAVVGVAGSAFS. Positions 18–55 are LQLFLAK domain; that stretch reads VRVDESDTVDDLKDAIKAKKPNDFKDIDADKLELYVAK. The interval 58 to 111 is DWL domain; sequence GVWLTEADVKSGVADITGLVRLEVVRAKLFSVGLSDEVVSEVDAQEEAAGRGPV. An HVLVXXP motif motif is present at residues 112–117; that stretch reads NVLVVV. A Host nuclear localization signal motif is present at residues 118 to 124; it reads PMKKRRV. A C-terminal DC effector domain region spans residues 125 to 820; sequence DAGVDEERRF…MHYDDDEADL (696 aa). N-linked (GlcNAc...) asparagine glycans are attached at residues asparagine 268, asparagine 371, and asparagine 703. A hhH DNA-binding domain region spans residues 754–791; it reads NINTASFHELRRLEGVGDATAAKIIAERTIRRFSNLED.

The protein belongs to the Crinkler effector family.

It is found in the secreted. The protein resides in the host nucleus. Functionally, secreted effector that suppresses plant basal defense and promotes plant susceptibility via targeting promoters of host HSP gene and thus inhibiting their expression. CRN108 binds directly to heat shock elements (HSEs) 5'-GAAnnTTC-3' and interferes with the association of the HSE with the plant heat shock transcription factors, which initializes HSP gene expression in response to stress. The protein is Crinkler effector protein 108 of Phytophthora sojae (Soybean stem and root rot agent).